Consider the following 430-residue polypeptide: Adenylosuccinate synthetase (430 aa).

Residues 13-19 (GDEGKGK) and 41-43 (GHT) contribute to the GTP site. The active-site Proton acceptor is aspartate 14. 2 residues coordinate Mg(2+): aspartate 14 and glycine 41. Residues 14-17 (DEGK), 39-42 (NAGH), threonine 130, arginine 144, glutamine 225, threonine 240, and arginine 304 contribute to the IMP site. Histidine 42 acts as the Proton donor in catalysis. Residue 300 to 306 (ASTGRPR) coordinates substrate. GTP-binding positions include arginine 306, 332-334 (KLD), and 414-416 (STG).

Belongs to the adenylosuccinate synthetase family. In terms of assembly, homodimer. Mg(2+) is required as a cofactor.

The protein localises to the cytoplasm. The enzyme catalyses IMP + L-aspartate + GTP = N(6)-(1,2-dicarboxyethyl)-AMP + GDP + phosphate + 2 H(+). Its pathway is purine metabolism; AMP biosynthesis via de novo pathway; AMP from IMP: step 1/2. Its function is as follows. Plays an important role in the de novo pathway of purine nucleotide biosynthesis. Catalyzes the first committed step in the biosynthesis of AMP from IMP. The sequence is that of Adenylosuccinate synthetase from Stenotrophomonas maltophilia (strain R551-3).